Reading from the N-terminus, the 1776-residue chain is TOG array regulator of axonemal microtubules protein 1 (1776 aa).

TOG regions lie at residues 94-311 (EEET…RRLE) and 351-595 (PQEL…MPSS). HEAT repeat units lie at residues 175–212 (AFSLALLPQLVVSLREDNPALRKDALQILHICLRRSSG), 214–246 (VLRTLIQGLESPDARLRASTALLLPILFTPEDL), 250–288 (LDLTEVIISLARKLGDQEMEEESETAFSSLQQIGERLGQ), 344–383 (NLKFEIIPQELHARLLDQEDYKNRTQAVEELKQLLGKFNP), 389–426 (ASLVGFISLLYNLLDDSNFKVVHGTLQVLHLLVIRLGE), 430–465 (QFLGPVIAASVKVLADNKLVIKQEYMKIFLKLMKEV), 466–503 (GPQRVLSLLLENLKHKHSRVREEVVNICICSLLTYPSE), and 505–542 (FDLPKLSFDLAPALVDSKRRVRQAALEAFAVLASSMGS). 4 disordered regions span residues 655-676 (KNKLPWENEQPGVMGENQTSNS), 817-921 (ILPS…RGIN), 970-1000 (HSSLRSLRNSAAKKRAKLSGSSSTSDVDSPD), and 1062-1084 (TRLSSAKKTSHAAEQSPSAGFTR). Polar residues-rich tracts occupy residues 826 to 836 (PRTSPKHTSPL), 845 to 855 (DNSISFSNSWP), and 871 to 892 (LANQKSSDPTGENFQEKTTAVQ). Residues 988-1000 (SGSSSTSDVDSPD) are compositionally biased toward low complexity. The tract at residues 1259-1481 (DIALTEALRL…YIKESVKNLR (223 aa)) is TOG 3. HEAT repeat units follow at residues 1297–1334 (TKLHETTFAVVQEVKNLRSGVSRAAVVCLGDLFTYLKK) and 1338–1375 (QELDSAVRALLHKAGESNTFIREDVDKALKAMVNNVTP). The tract at residues 1493–1536 (ASAKGRRSHPGSVGNTRSSSVSRDAFSSSEREVTEVREVPRKSA) is disordered. The segment covering 1509–1520 (RSSSVSRDAFSS) has biased composition (low complexity). Over residues 1521–1533 (SEREVTEVREVPR) the composition is skewed to basic and acidic residues. The TOG 4 stretch occupies residues 1540 to 1776 (SLESAEYIKV…LLDVTVLSEL (237 aa)). HEAT repeat units follow at residues 1541-1578 (LESAEYIKVITGLLNAKDFRDRINGIKQLLSDTENNQE), 1582-1619 (GNIVKIFDAFKSRLHDSNSKVNLVALETMHKMIPLLRD), and 1623-1661 (PIINMLIPAIVDNNLNSKNPGIYAAATNVVHALSQHVDN).

Belongs to the Crescerin family. In terms of assembly, interacts with ARMC9. Interacts with CCDC66, CEP104 and CSPP1.

The protein resides in the cell projection. It is found in the cilium. It localises to the cytoplasm. Its subcellular location is the cytoskeleton. The protein localises to the cilium axoneme. Involved in ciliogenesis. It is required for appropriate acetylation and polyglutamylation of ciliary microtubules, and regulation of cilium length. Interacts with microtubules and promotes microtubule polymerization via its HEAT repeat domains, especially those in TOG region 2 and 4. The sequence is that of TOG array regulator of axonemal microtubules protein 1 (Togaram1) from Mus musculus (Mouse).